Consider the following 139-residue polypeptide: Putative pre-16S rRNA nuclease (139 aa).

It belongs to the YqgF nuclease family.

Its subcellular location is the cytoplasm. Functionally, could be a nuclease involved in processing of the 5'-end of pre-16S rRNA. The sequence is that of Putative pre-16S rRNA nuclease from Streptococcus pyogenes serotype M49 (strain NZ131).